Here is a 131-residue protein sequence, read N- to C-terminus: Small ribosomal subunit protein eS8 (131 aa).

The segment at 1-42 (MKLGAYYKGGDLKKPSGGKKRKVRKTKKKALGGGPPQIPKLG) is disordered. Residues 16-30 (SGGKKRKVRKTKKKA) show a composition bias toward basic residues.

It belongs to the eukaryotic ribosomal protein eS8 family. In terms of assembly, part of the 30S ribosomal subunit.

In Pyrobaculum aerophilum (strain ATCC 51768 / DSM 7523 / JCM 9630 / CIP 104966 / NBRC 100827 / IM2), this protein is Small ribosomal subunit protein eS8.